We begin with the raw amino-acid sequence, 813 residues long: MAEKYNPQETEKKWQDKWAADRLYHASEDSPKPKWYSLTMFPYTSGNLHIGHWYAEVPADCFARYKRLRGFNVMRPVGFDSFGLPAENAAIKHNIHPRIWTLNNVENMRRQLKTIGAMFDWDREVITCLPEYYKWTQWFFLKLYEAGLAYRAKAPVNWCPSCQAVLANEQVVDGTCWRCETPTTRRDLEQWFFRITNYADELKDHEGLDWPEKITAMQRNWVGKSYGAEVSFALDCPTAFEKEIKVFTTRPDTIYGVTFMVLAPEHPLVEKITTPENKAAVDAYIKKSRTCTEIERLSTEREKDGVFTGTYVTNRVNGQKVPVWIGDYVLQSYGTGAVMGVPAHDERDFVFAQKYHLPVITVIAPSAYDGKPLEAAYINEGVMLNSGPFNGTPNTEGKEKVCDYLAEHGWGKKTVNYKLRDWLISRQRYWGAPIPMVYCEKCGIVPVPEKDLPVLLPEDVGFRSGGESPLKYNEGFVNTICPVCGGKAKRETDTMDTFMCSSWYFLRYTSPGYDKGPFDPVKLKYWMPVDLYTGGAEHAVMHLFYSRFFTKALRDMGIIDFGEPFKKLFNQGIIVSNHQKMSKSKGNVVTPDNLVAEVGTDAVRAYLMFVGPWDQGGEWNDSGLSGMSRWLNRVWNLFTEEYTPQTASAEAERELKRTLHQTIKKITMDIERLRFNTVVAALMELSNSLAKLKETAAISAENWQNTLQTFALMLAPVAPHIAEELWANLGMKYSIHNQNWPTWDEELAKDEVITLIIQVNGKLRERLEMPAGISEAEAKETALNSERVKPHLLGKTPVTVIYVPGKLVNIVVK.

The short motif at 42 to 52 is the 'HIGH' region element; the sequence is PYTSGNLHIGH. A 'KMSKS' region motif is present at residues 580-584; it reads KMSKS. ATP is bound at residue lysine 583.

It belongs to the class-I aminoacyl-tRNA synthetase family.

It is found in the cytoplasm. The catalysed reaction is tRNA(Leu) + L-leucine + ATP = L-leucyl-tRNA(Leu) + AMP + diphosphate. This chain is Leucine--tRNA ligase, found in Dehalococcoides mccartyi (strain ATCC BAA-2100 / JCM 16839 / KCTC 5957 / BAV1).